Consider the following 183-residue polypeptide: Probable calcium-binding protein CML47 (183 aa).

EF-hand domains are found at residues M112–D147 and C149–S183. Ca(2+) is bound by residues D125, N127, D129, E136, D162, N164, D166, K168, and E173.

Its function is as follows. Potential calcium sensor. The polypeptide is Probable calcium-binding protein CML47 (CML47) (Arabidopsis thaliana (Mouse-ear cress)).